The following is a 349-amino-acid chain: tRNA (guanine(26)-N(2))-dimethyltransferase (349 aa).

The Trm1 methyltransferase domain occupies 1–343 (MEVEEGRARV…ADRDVVVKIL (343 aa)). Arg25, Arg50, Asp66, Asp92, and Ala93 together coordinate S-adenosyl-L-methionine.

This sequence belongs to the class I-like SAM-binding methyltransferase superfamily. Trm1 family.

It catalyses the reaction guanosine(26) in tRNA + 2 S-adenosyl-L-methionine = N(2)-dimethylguanosine(26) in tRNA + 2 S-adenosyl-L-homocysteine + 2 H(+). Functionally, dimethylates a single guanine residue at position 26 of a number of tRNAs using S-adenosyl-L-methionine as donor of the methyl groups. The polypeptide is tRNA (guanine(26)-N(2))-dimethyltransferase (Archaeoglobus fulgidus (strain ATCC 49558 / DSM 4304 / JCM 9628 / NBRC 100126 / VC-16)).